Consider the following 498-residue polypeptide: Probable malate:quinone oxidoreductase (498 aa).

This sequence belongs to the MQO family. It depends on FAD as a cofactor.

It catalyses the reaction (S)-malate + a quinone = a quinol + oxaloacetate. It participates in carbohydrate metabolism; tricarboxylic acid cycle; oxaloacetate from (S)-malate (quinone route): step 1/1. In Granulibacter bethesdensis (strain ATCC BAA-1260 / CGDNIH1), this protein is Probable malate:quinone oxidoreductase.